A 389-amino-acid chain; its full sequence is MAATDRLNQTSDILSHSMKKTDTSMSIVTAENPYKVAVVGSGNWGTTIAKVVAENTKEKPELFQGRVDMWVFEEQIDGTPLTQIINTKHQNVKYLPNIDLPGNLVANPDLISTTKDADVIVFNVPHQFLGRIVSQMKGQIKPDARAISCLKGFEVGPKGVQLLSDYVTQELGIQCGALSGANLAPEVAKEHWSETTVAYQVPDDFKGEGKDIDHRVLKQLFHRPYFHVNVIDDVAGISIAGALKNVVALGCGFVTGLGWGNNAAAAIQRVGLGEIIKFGRMFFPESKVETYYQESAGVADLITTCSGGRNVRVATEMAKTGKSGEQVEKDILNGQSAQGLITAKEVHQWLESSGHTEEYPLFEAVYQITYENVPMKELPSMIEELDIVE.

NAD(+) is bound by residues 40 to 45, F128, K151, and A184; that span reads GSGNWG. Position 151 (K151) interacts with substrate. K244 acts as the Proton acceptor in catalysis. Positions 309 and 338 each coordinate NAD(+). 309–310 is a substrate binding site; the sequence is RN.

The protein belongs to the NAD-dependent glycerol-3-phosphate dehydrogenase family.

Its subcellular location is the cytoplasm. It carries out the reaction sn-glycerol 3-phosphate + NAD(+) = dihydroxyacetone phosphate + NADH + H(+). This chain is Glycerol-3-phosphate dehydrogenase [NAD(+)] 2 (GPD2), found in Zygosaccharomyces rouxii.